The chain runs to 67 residues: Protein AaeX (67 aa).

The next 2 helical transmembrane spans lie at 3–23 and 43–63; these read LFPVIVVFGLSFPPIFFKLLL and FVWHPALFNTALYCCLFYLIS.

It belongs to the AaeX family.

Its subcellular location is the cell membrane. The protein is Protein AaeX of Salmonella gallinarum (strain 287/91 / NCTC 13346).